Consider the following 297-residue polypeptide: tRNA uridine(34) hydroxylase (297 aa).

The 96-residue stretch at 137–232 (RGDDVVFFDG…YGEKYGDKGL (96 aa)) folds into the Rhodanese domain. Cys-192 serves as the catalytic Cysteine persulfide intermediate.

This sequence belongs to the TrhO family.

It catalyses the reaction uridine(34) in tRNA + AH2 + O2 = 5-hydroxyuridine(34) in tRNA + A + H2O. Functionally, catalyzes oxygen-dependent 5-hydroxyuridine (ho5U) modification at position 34 in tRNAs. This Corynebacterium urealyticum (strain ATCC 43042 / DSM 7109) protein is tRNA uridine(34) hydroxylase.